The following is a 410-amino-acid chain: UPF0761 membrane protein Csal_1895 (410 aa).

The next 6 helical transmembrane spans lie at Leu-43–Phe-63, Ser-99–Val-119, Phe-139–Leu-159, Val-180–Met-200, Ala-212–Leu-232, and Phe-247–Gly-267.

Belongs to the UPF0761 family.

The protein resides in the cell inner membrane. The chain is UPF0761 membrane protein Csal_1895 from Chromohalobacter salexigens (strain ATCC BAA-138 / DSM 3043 / CIP 106854 / NCIMB 13768 / 1H11).